The chain runs to 855 residues: MAEDRGTRLWQFPDHVYLNFTAMHGIQHVVDRISSLAEESVTPAERPPLSWFEAVARADSPDEVPPRELPFRVYLITGNAGSGKSTCIQALTEMLNCVTTGSTRVAALNVFTKLSSAYTSPAIQTIFHDFGFKGSHVQAVLGKFKYPKQPDPKSLVDAQMSDLYYYWDVLKDIANKVVEGGLPETMRVLLSLELKSGKPFTDAAPFLSAATPALIRSNVVLIDEAGVLGKHILTAVVFSWWLHNALWQTRRYAEGKVPVIVCIGSPTQTDAMESVFEHSTLRHLVSNKTNILSHLIRSSEMAERMNLNRNWTIFINNKRCTEQDFGNVLKAFEFGLPMNEGHARFLDQFVVSESYIKDPSKLPGWTRLFASHDDVKVYMSRLHANLRARRSDKFKVFVLPIYTVVSLEAFDKYKELTGQTSLTMEKWLTANASRLGNYSQSRDLDVTTPRFEYGTADGKKFALITTDASHVLNSQISVTKRVKKLVFGFEGSFGDFAAVLSEDTFFKKHGEDHVEFAYRFIAALLFSGMIAFYDFLRTEGLPQDKVDAAYSRLQAVTADLLAATHEQLGIAAAAGAQTGSGARRSRNADAFAFDDDASEEVTDAELDDLFGAMTDNSMDAFYLNYEKLPADAHGQEIFFHFDMLKRLFSERYDALSGLFGKTFTSAPFRTFVGQASFNGSNAFVSSFSGGILSFTSQTDAYTLRGVTRAPVPCFVDELFRGRDWAAAILRETDMPRVVVSDSMGFVSVINHNMSTFVDNVSGEELQMAATVDHGISSNLAMTITRSQGLGLDRVAICFATSQLKLNTAYVAMSRVTSCRYLRMNVNPLRTHYEDTRRVSAHILAALRCKDVKLVY.

Gly78–Ser85 serves as a coordination point for ATP.

Belongs to the herpesviridae helicase family. In terms of assembly, associates with the primase and the primase-associated factor to form the helicase-primase complex.

The protein resides in the host nucleus. Functionally, component of the helicase/primase complex. Unwinds the DNA at the replication forks and generates single-stranded DNA for both leading and lagging strand synthesis. The primase synthesizes short RNA primers on the lagging strand that the polymerase elongates using dNTPs. Possesses helicase-like motifs and therefore may act as the helicase subunit of the complex. The sequence is that of DNA replication helicase from Amazona oratrix (yellow-headed parrot).